The following is a 234-amino-acid chain: Lipoprotein-releasing system ATP-binding protein LolD (234 aa).

Residues 7 to 234 (LLCNNLCKKY…QDELTVTGAL (228 aa)) form the ABC transporter domain. 43–50 (GSSGSGKS) lines the ATP pocket.

It belongs to the ABC transporter superfamily. Lipoprotein translocase (TC 3.A.1.125) family. In terms of assembly, the complex is composed of two ATP-binding proteins (LolD) and two transmembrane proteins (LolC and LolE).

It localises to the cell inner membrane. Its function is as follows. Part of the ABC transporter complex LolCDE involved in the translocation of mature outer membrane-directed lipoproteins, from the inner membrane to the periplasmic chaperone, LolA. Responsible for the formation of the LolA-lipoprotein complex in an ATP-dependent manner. The chain is Lipoprotein-releasing system ATP-binding protein LolD from Photorhabdus laumondii subsp. laumondii (strain DSM 15139 / CIP 105565 / TT01) (Photorhabdus luminescens subsp. laumondii).